Reading from the N-terminus, the 187-residue chain is Elongation factor P (187 aa).

It belongs to the elongation factor P family.

The protein resides in the cytoplasm. It functions in the pathway protein biosynthesis; polypeptide chain elongation. Involved in peptide bond synthesis. Stimulates efficient translation and peptide-bond synthesis on native or reconstituted 70S ribosomes in vitro. Probably functions indirectly by altering the affinity of the ribosome for aminoacyl-tRNA, thus increasing their reactivity as acceptors for peptidyl transferase. The chain is Elongation factor P from Mycoplasmopsis agalactiae (strain NCTC 10123 / CIP 59.7 / PG2) (Mycoplasma agalactiae).